Consider the following 432-residue polypeptide: D-amino acid dehydrogenase (432 aa).

3-17 (VLVLGSGVIGTASAY) contributes to the FAD binding site.

It belongs to the DadA oxidoreductase family. It depends on FAD as a cofactor.

It catalyses the reaction a D-alpha-amino acid + A + H2O = a 2-oxocarboxylate + AH2 + NH4(+). It participates in amino-acid degradation; D-alanine degradation; NH(3) and pyruvate from D-alanine: step 1/1. Its function is as follows. Oxidative deamination of D-amino acids. The polypeptide is D-amino acid dehydrogenase (Ectopseudomonas mendocina (strain ymp) (Pseudomonas mendocina)).